Reading from the N-terminus, the 141-residue chain is Hemoglobin subunit alpha (141 aa).

One can recognise a Globin domain in the interval 1-141 (VLSSADKNNV…VSTVLTSKYR (141 aa)). Residue serine 3 is modified to Phosphoserine. An N6-succinyllysine mark is found at lysine 7 and lysine 11. Lysine 16 carries the N6-acetyllysine; alternate modification. N6-succinyllysine; alternate is present on lysine 16. Tyrosine 24 is subject to Phosphotyrosine. Position 35 is a phosphoserine (serine 35). Lysine 40 carries the N6-succinyllysine modification. Residue serine 49 is modified to Phosphoserine. Histidine 58 is an O2 binding site. Residue histidine 87 participates in heme b binding. Serine 102 bears the Phosphoserine mark. A Phosphothreonine modification is found at threonine 108. Position 124 is a phosphoserine (serine 124). 2 positions are modified to phosphothreonine: threonine 134 and threonine 137. Position 138 is a phosphoserine (serine 138).

Belongs to the globin family. Heterotetramer of two alpha chains and two beta chains. In terms of tissue distribution, red blood cells.

Involved in oxygen transport from the lung to the various peripheral tissues. Its function is as follows. Hemopressin acts as an antagonist peptide of the cannabinoid receptor CNR1. Hemopressin-binding efficiently blocks cannabinoid receptor CNR1 and subsequent signaling. This Panthera pardus saxicolor (Northern Persian leopard) protein is Hemoglobin subunit alpha (HBA).